A 179-amino-acid polypeptide reads, in one-letter code: Pectinesterase inhibitor 5 (179 aa).

The first 25 residues, 1–25 (MATMLINHMLFLTSLLIVVFPVANA), serve as a signal peptide directing secretion. 2 disulfides stabilise this stretch: Cys-35–Cys-44 and Cys-101–Cys-141.

It belongs to the PMEI family. As to expression, expressed in seeds, buds, and mature flowers.

Its subcellular location is the secreted. The protein localises to the extracellular space. It is found in the apoplast. In terms of biological role, pectin methylesterase (PME) inhibitor that targets PME from seeds and modulates PME activity and pectin methylesterification during seed germination. The sequence is that of Pectinesterase inhibitor 5 from Arabidopsis thaliana (Mouse-ear cress).